The following is a 643-amino-acid chain: Probable potassium transport system protein Kup 2 (643 aa).

The tract at residues 1-20 (MSSHVPSFLRGTPDMTAHGG) is disordered. Transmembrane regions (helical) follow at residues 27–47 (VAGL…TSPL), 70–90 (VLSL…VIII), 120–140 (LMVS…SIIT), 157–177 (PHLE…LFAI), 185–205 (VGKM…ILGI), 231–251 (GWHA…AEAL), 267–287 (WYLL…ALLI), 300–320 (LAPA…TVIA), 357–377 (IYLP…VVGF), 389–409 (VAVT…MLLI), 419–439 (WLIG…SIKI), and 440–460 (PDGG…LTTW).

Belongs to the HAK/KUP transporter (TC 2.A.72) family.

The protein resides in the cell inner membrane. It catalyses the reaction K(+)(in) + H(+)(in) = K(+)(out) + H(+)(out). In terms of biological role, transport of potassium into the cell. Likely operates as a K(+):H(+) symporter. The sequence is that of Probable potassium transport system protein Kup 2 from Paramagnetospirillum magneticum (strain ATCC 700264 / AMB-1) (Magnetospirillum magneticum).